We begin with the raw amino-acid sequence, 449 residues long: Signal recognition particle protein (449 aa).

GTP contacts are provided by residues 109–116 (GLQGGGKT), 191–195 (DTAGR), and 249–252 (SRID).

Belongs to the GTP-binding SRP family. SRP54 subfamily. As to quaternary structure, part of the signal recognition particle protein translocation system, which is composed of SRP and FtsY. SRP is a ribonucleoprotein composed of Ffh and a 4.5S RNA molecule.

Its subcellular location is the cytoplasm. The catalysed reaction is GTP + H2O = GDP + phosphate + H(+). In terms of biological role, involved in targeting and insertion of nascent membrane proteins into the cytoplasmic membrane. Binds to the hydrophobic signal sequence of the ribosome-nascent chain (RNC) as it emerges from the ribosomes. The SRP-RNC complex is then targeted to the cytoplasmic membrane where it interacts with the SRP receptor FtsY. Interaction with FtsY leads to the transfer of the RNC complex to the Sec translocase for insertion into the membrane, the hydrolysis of GTP by both Ffh and FtsY, and the dissociation of the SRP-FtsY complex into the individual components. The sequence is that of Signal recognition particle protein from Rickettsia prowazekii (strain Madrid E).